The following is a 322-amino-acid chain: Myeloid-associated differentiation marker (322 aa).

The segment at 1-25 (MPVTVTRTTITTTTTSSSGQGSPTI) is disordered. Ser-22 carries the post-translational modification Phosphoserine. 2 consecutive MARVEL domains span residues 31–163 (ALTQ…ARPG) and 168–319 (YMAT…HLVF). The next 8 membrane-spanning stretches (helical) occupy residues 41 to 61 (LLQL…GAWT), 70 to 90 (FTWC…LCGL), 101 to 121 (FPIT…IIYP), 137 to 157 (AIAA…EVAW), 171 to 191 (TVPG…FAFI), 203 to 223 (LEWC…AILL), 239 to 259 (FLSG…VLWP), and 294 to 314 (LAVA…LVHS).

It belongs to the MAL family.

It is found in the membrane. In Pongo abelii (Sumatran orangutan), this protein is Myeloid-associated differentiation marker (MYADM).